The sequence spans 116 residues: G antigen 2A (116 aa).

Positions 1–116 (MSWRGRSTYR…PEEGEKQSQC (116 aa)) are disordered. 2 stretches are compositionally biased toward acidic residues: residues 31 to 44 (FSDE…EEGE) and 86 to 95 (ECEDGPDGQE). Over residues 102–116 (EEVKTPEEGEKQSQC) the composition is skewed to basic and acidic residues.

The protein belongs to the GAGE family.

This Homo sapiens (Human) protein is G antigen 2A (GAGE2A).